The following is a 142-amino-acid chain: Cytochrome c-type biogenesis protein CcmE (142 aa).

Residues 1–2 lie on the Cytoplasmic side of the membrane; it reads MK. A helical; Signal-anchor for type II membrane protein transmembrane segment spans residues 3–23; sequence GKYLLGILVILGALGYMVFGG. The Periplasmic segment spans residues 24-142; sequence LGRNLVYFLT…EVRKLIEEAQ (119 aa). His-118 and Tyr-122 together coordinate heme.

The protein belongs to the CcmE/CycJ family.

Its subcellular location is the cell inner membrane. In terms of biological role, heme chaperone required for the biogenesis of c-type cytochromes. Transiently binds heme delivered by CcmC and transfers the heme to apo-cytochromes in a process facilitated by CcmF and CcmH. The polypeptide is Cytochrome c-type biogenesis protein CcmE (Thermus thermophilus (strain ATCC 27634 / DSM 579 / HB8)).